Reading from the N-terminus, the 585-residue chain is Arginine--tRNA ligase (585 aa).

The short motif at 127 to 137 (PNTNKPLHVGH) is the 'HIGH' region element.

The protein belongs to the class-I aminoacyl-tRNA synthetase family. As to quaternary structure, monomer.

Its subcellular location is the cytoplasm. It catalyses the reaction tRNA(Arg) + L-arginine + ATP = L-arginyl-tRNA(Arg) + AMP + diphosphate. The chain is Arginine--tRNA ligase from Borreliella afzelii (strain PKo) (Borrelia afzelii).